We begin with the raw amino-acid sequence, 368 residues long: Germination protease (368 aa).

A propeptide spanning residues Met-1–Asp-16 is cleaved from the precursor.

It belongs to the peptidase A25 family. In terms of assembly, homotetramer. Autoproteolytically processed. The inactive tetrameric zymogen termed p46 autoprocesses to a smaller form termed p41, which is active only during spore germination.

The enzyme catalyses Endopeptidase action with P4 Glu or Asp, P1 preferably Glu &gt; Asp, P1' hydrophobic and P2' Ala.. In terms of biological role, initiates the rapid degradation of small, acid-soluble proteins during spore germination. The protein is Germination protease of Bacillus velezensis (strain DSM 23117 / BGSC 10A6 / LMG 26770 / FZB42) (Bacillus amyloliquefaciens subsp. plantarum).